Consider the following 325-residue polypeptide: UPF0285 protein MmarC6_0247 (325 aa).

It belongs to the UPF0285 family.

This chain is UPF0285 protein MmarC6_0247, found in Methanococcus maripaludis (strain C6 / ATCC BAA-1332).